A 240-amino-acid polypeptide reads, in one-letter code: MGRSFEVRKASMAKTQGAKIKVYSKYGKEIYMCAKNGGADPDMNLSLKHLISKAKKDQVPAHVIDKALDKATGGGGEDYQHARYEGFAPGGASVIVDCLTDNGNRTFQDVRQCFVKTGAKIGSPGTSAHMFDHQAVFQFKGDDEEAVLEALMMQDADVTDIELEDGVITVFAPNTEFFKVKTALAAEYPDLVLDVEEITFVPQNHTPVTGEDAEKFQKFLDMLDDCDDVQQVYHNAELED.

This sequence belongs to the TACO1 family.

It is found in the cytoplasm. In Aliivibrio fischeri (strain MJ11) (Vibrio fischeri), this protein is Probable transcriptional regulatory protein VFMJ11_A0186.